A 181-amino-acid polypeptide reads, in one-letter code: Probable nicotinate-nucleotide adenylyltransferase (181 aa).

It belongs to the NadD family.

The enzyme catalyses nicotinate beta-D-ribonucleotide + ATP + H(+) = deamido-NAD(+) + diphosphate. The protein operates within cofactor biosynthesis; NAD(+) biosynthesis; deamido-NAD(+) from nicotinate D-ribonucleotide: step 1/1. In terms of biological role, catalyzes the reversible adenylation of nicotinate mononucleotide (NaMN) to nicotinic acid adenine dinucleotide (NaAD). This chain is Probable nicotinate-nucleotide adenylyltransferase, found in Campylobacter jejuni subsp. jejuni serotype O:6 (strain 81116 / NCTC 11828).